A 468-amino-acid polypeptide reads, in one-letter code: Probable protein phosphatase 2C 52 (468 aa).

Positions 67 to 372 constitute a PPM-type phosphatase domain; the sequence is SSCIFTQQGR…DDCAVVCLFL (306 aa). Positions 102, 103, 317, and 363 each coordinate Mn(2+). Residues 413–429 show a composition bias toward polar residues; the sequence is RSSSDQENETYGNVNTE. A disordered region spans residues 413–442; it reads RSSSDQENETYGNVNTETDAEDEKTVGDQN.

This sequence belongs to the PP2C family. Requires Mg(2+) as cofactor. It depends on Mn(2+) as a cofactor.

The enzyme catalyses O-phospho-L-seryl-[protein] + H2O = L-seryl-[protein] + phosphate. It catalyses the reaction O-phospho-L-threonyl-[protein] + H2O = L-threonyl-[protein] + phosphate. The sequence is that of Probable protein phosphatase 2C 52 from Arabidopsis thaliana (Mouse-ear cress).